Here is a 473-residue protein sequence, read N- to C-terminus: 6-phosphogluconate dehydrogenase, decarboxylating (473 aa).

Residues 10 to 15 (GMAVMG), 33 to 35 (NRT), 74 to 76 (VKS), and N102 contribute to the NADP(+) site. Residues N102 and 128–130 (SGG) contribute to the substrate site. Catalysis depends on K182, which acts as the Proton acceptor. 185–186 (HN) provides a ligand contact to substrate. E189 acts as the Proton donor in catalysis. 5 residues coordinate substrate: Y190, K260, R287, R446, and H452.

The protein belongs to the 6-phosphogluconate dehydrogenase family. As to quaternary structure, homodimer.

It catalyses the reaction 6-phospho-D-gluconate + NADP(+) = D-ribulose 5-phosphate + CO2 + NADPH. It functions in the pathway carbohydrate degradation; pentose phosphate pathway; D-ribulose 5-phosphate from D-glucose 6-phosphate (oxidative stage): step 3/3. Functionally, catalyzes the oxidative decarboxylation of 6-phosphogluconate to ribulose 5-phosphate and CO(2), with concomitant reduction of NADP to NADPH. In Buchnera aphidicola subsp. Schizaphis graminum (strain Sg), this protein is 6-phosphogluconate dehydrogenase, decarboxylating (gnd).